A 304-amino-acid chain; its full sequence is bZIP transcription factor 50 (304 aa).

At methionine 1 to threonine 222 the chain is on the cytoplasmic side. Disordered regions lie at residues glycine 26–alanine 60 and glycine 94–lysine 163. Over residues serine 45–glutamate 59 the composition is skewed to low complexity. Residues glutamate 127–aspartate 139 show a composition bias toward acidic residues. The bZIP domain maps to methionine 141–lysine 203. A basic motif region spans residues lysine 143 to lysine 167. The segment covering arginine 150–lysine 163 has biased composition (basic and acidic residues). The segment at leucine 169–leucine 183 is leucine-zipper. The helical transmembrane segment at leucine 223–leucine 243 threads the bilayer. The Lumenal portion of the chain corresponds to proline 244–cysteine 304.

This sequence belongs to the bZIP family.

It is found in the endoplasmic reticulum membrane. The protein resides in the nucleus. With respect to regulation, transcriptionally activated by IRE1 in response to endoplasmic reticulum (ER) stress. IRE1 cleaves a 20-bp fragment causing a frameshift of the mRNA transcript, leading to a nuclear isoform of the BZIP50 activator. In terms of biological role, transcription factor involved in endoplasmic reticulum (ER) stress response. Acts downstream of the ER stress sensors IRE1, BZIP39 and BZIP60 to activate BiP chaperone genes. This chain is bZIP transcription factor 50, found in Oryza sativa subsp. japonica (Rice).